The chain runs to 615 residues: 1-deoxy-D-xylulose-5-phosphate synthase (615 aa).

Residues His77 and 118–120 (GHS) each bind thiamine diphosphate. Residue Asp149 participates in Mg(2+) binding. Thiamine diphosphate is bound by residues 150-151 (GA), Asn178, Tyr286, and Glu367. A Mg(2+)-binding site is contributed by Asn178.

This sequence belongs to the transketolase family. DXPS subfamily. As to quaternary structure, homodimer. The cofactor is Mg(2+). Requires thiamine diphosphate as cofactor.

It catalyses the reaction D-glyceraldehyde 3-phosphate + pyruvate + H(+) = 1-deoxy-D-xylulose 5-phosphate + CO2. The protein operates within metabolic intermediate biosynthesis; 1-deoxy-D-xylulose 5-phosphate biosynthesis; 1-deoxy-D-xylulose 5-phosphate from D-glyceraldehyde 3-phosphate and pyruvate: step 1/1. Functionally, catalyzes the acyloin condensation reaction between C atoms 2 and 3 of pyruvate and glyceraldehyde 3-phosphate to yield 1-deoxy-D-xylulose-5-phosphate (DXP). The chain is 1-deoxy-D-xylulose-5-phosphate synthase from Glaesserella parasuis serovar 5 (strain SH0165) (Haemophilus parasuis).